The primary structure comprises 1261 residues: Pentatricopeptide repeat-containing protein 5, mitochondrial (1261 aa).

PPR repeat units lie at residues 365 to 404 (HPDL…TSMT), 405 to 442 (NVRS…NQVI), 443 to 479 (PSSI…TYKA), 480 to 514 (SPST…RFSD), 550 to 584 (TNFT…KVSL), 806 to 849 (HPEV…EKAN), 852 to 886 (MALI…GYIP), 887 to 924 (RAST…NVKP), 925 to 959 (SVFL…GLLP), 960 to 995 (TSVT…NYQP), 996 to 1031 (RVAP…DIEP), 1032 to 1068 (SSHT…DVPI), 1109 to 1143 (DANL…NVSL), 1144 to 1179 (NAYI…MSGK), and 1180 to 1214 (EPST…RYPL). The disordered stretch occupies residues 1225 to 1261 (NSHMGQKPKRRSLNTSHSSLASLGNASTQHSINSSIN). Residues 1237-1261 (LNTSHSSLASLGNASTQHSINSSIN) show a composition bias toward polar residues.

It is found in the mitochondrion. In terms of biological role, mitochondrial RNA-binding protein that acts as a general negative regulator of mitochondrial translation. The sequence is that of Pentatricopeptide repeat-containing protein 5, mitochondrial (ppr5) from Schizosaccharomyces pombe (strain 972 / ATCC 24843) (Fission yeast).